A 438-amino-acid polypeptide reads, in one-letter code: Serine carboxypeptidase-like 5 (438 aa).

The first 28 residues, 1–28 (MANYISSVLKSLLLLLHLVFLIQQHVDS), serve as a signal peptide directing secretion. 3 disulfides stabilise this stretch: cysteine 87–cysteine 328, cysteine 251–cysteine 263, and cysteine 287–cysteine 294. Asparagine 108 carries an N-linked (GlcNAc...) asparagine glycan. Residue serine 183 is part of the active site. Asparagine 347 carries an N-linked (GlcNAc...) asparagine glycan. Residue aspartate 363 is part of the active site. Asparagine 379 is a glycosylation site (N-linked (GlcNAc...) asparagine). The active site involves histidine 416.

This sequence belongs to the peptidase S10 family. In terms of tissue distribution, expressed in seedlings, roots, and siliques.

The protein resides in the secreted. Probable carboxypeptidase. The protein is Serine carboxypeptidase-like 5 (SCPL5) of Arabidopsis thaliana (Mouse-ear cress).